The primary structure comprises 250 residues: 23S rRNA (guanosine-2'-O-)-methyltransferase RlmB (250 aa).

Positions 198, 218, and 227 each coordinate S-adenosyl-L-methionine.

Belongs to the class IV-like SAM-binding methyltransferase superfamily. RNA methyltransferase TrmH family. RlmB subfamily.

It localises to the cytoplasm. It carries out the reaction guanosine(2251) in 23S rRNA + S-adenosyl-L-methionine = 2'-O-methylguanosine(2251) in 23S rRNA + S-adenosyl-L-homocysteine + H(+). Its function is as follows. Specifically methylates the ribose of guanosine 2251 in 23S rRNA. The protein is 23S rRNA (guanosine-2'-O-)-methyltransferase RlmB of Coxiella burnetii (strain RSA 493 / Nine Mile phase I).